The sequence spans 62 residues: MPTFHIEMFEGRSADQKRKLVEEVTRVTCETLGCAPGAVDIIIAEVKRENWATGGVLWSEQK.

The active-site Proton acceptor; via imino nitrogen is proline 2.

The protein belongs to the 4-oxalocrotonate tautomerase family.

The chain is Probable tautomerase RSc0807 from Ralstonia nicotianae (strain ATCC BAA-1114 / GMI1000) (Ralstonia solanacearum).